The sequence spans 304 residues: Glutaminase (304 aa).

Substrate contacts are provided by S63, N114, E158, N165, Y189, Y240, and V258.

Belongs to the glutaminase family. Homotetramer.

It catalyses the reaction L-glutamine + H2O = L-glutamate + NH4(+). This Shewanella baltica (strain OS195) protein is Glutaminase.